A 568-amino-acid polypeptide reads, in one-letter code: 2-succinyl-5-enolpyruvyl-6-hydroxy-3-cyclohexene-1-carboxylate synthase (568 aa).

It belongs to the TPP enzyme family. MenD subfamily. As to quaternary structure, homodimer. Mg(2+) is required as a cofactor. It depends on Mn(2+) as a cofactor. Requires thiamine diphosphate as cofactor.

It carries out the reaction isochorismate + 2-oxoglutarate + H(+) = 5-enolpyruvoyl-6-hydroxy-2-succinyl-cyclohex-3-ene-1-carboxylate + CO2. It functions in the pathway quinol/quinone metabolism; 1,4-dihydroxy-2-naphthoate biosynthesis; 1,4-dihydroxy-2-naphthoate from chorismate: step 2/7. The protein operates within quinol/quinone metabolism; menaquinone biosynthesis. Catalyzes the thiamine diphosphate-dependent decarboxylation of 2-oxoglutarate and the subsequent addition of the resulting succinic semialdehyde-thiamine pyrophosphate anion to isochorismate to yield 2-succinyl-5-enolpyruvyl-6-hydroxy-3-cyclohexene-1-carboxylate (SEPHCHC). This Haemophilus influenzae (strain PittEE) protein is 2-succinyl-5-enolpyruvyl-6-hydroxy-3-cyclohexene-1-carboxylate synthase.